Reading from the N-terminus, the 419-residue chain is Mitogen-activated protein kinase spm1 (419 aa).

One can recognise a Protein kinase domain in the interval 23–314 (YTVTKELGQG…VEEALEHPYL (292 aa)). ATP is bound by residues 29–37 (LGQGAYGIV) and K52. Catalysis depends on D149, which acts as the Proton acceptor.

The protein belongs to the protein kinase superfamily. Ser/Thr protein kinase family. MAP kinase subfamily. It depends on Mg(2+) as a cofactor. Post-translationally, phosphorylated by the MAP kinase kinase mkk1.

It catalyses the reaction L-seryl-[protein] + ATP = O-phospho-L-seryl-[protein] + ADP + H(+). The enzyme catalyses L-threonyl-[protein] + ATP = O-phospho-L-threonyl-[protein] + ADP + H(+). Mitogen-activated protein kinase, part of the mkh1-mkk1-spm1 MAPK cascade that regulates vegetative growth, conidial formation, colony surface hydrophobicity, osmotic stress, cell wall integrity maintenance, carbon and nitrogen source utilization, chitin distribution, septa formation, and pathogenicity. The polypeptide is Mitogen-activated protein kinase spm1 (Cytospora mali (Apple Valsa canker fungus)).